We begin with the raw amino-acid sequence, 294 residues long: ATP synthase gamma chain (294 aa).

This sequence belongs to the ATPase gamma chain family. As to quaternary structure, F-type ATPases have 2 components, CF(1) - the catalytic core - and CF(0) - the membrane proton channel. CF(1) has five subunits: alpha(3), beta(3), gamma(1), delta(1), epsilon(1). CF(0) has three main subunits: a, b and c.

It is found in the cell inner membrane. In terms of biological role, produces ATP from ADP in the presence of a proton gradient across the membrane. The gamma chain is believed to be important in regulating ATPase activity and the flow of protons through the CF(0) complex. The sequence is that of ATP synthase gamma chain from Nitratiruptor sp. (strain SB155-2).